The chain runs to 755 residues: Ribosome biogenesis protein BOP1 (755 aa).

Composition is skewed to polar residues over residues 1 to 10 and 43 to 61; these read MSQEPSSSFS and ELSSSSDNGDQGQPLTEPN. Positions 1-65 are disordered; sequence MSQEPSSSFS…PLTEPNNIPI (65 aa). The segment at 309-754 is interaction with EB1; the sequence is MDSMLPTLPN…SGTDGVLRLF (446 aa). A WD 1 repeat occupies 335-374; sequence TGTRRINGLTFSPKGMFFAVGGRDCILRVFETYSGRQVRA. The disordered stretch occupies residues 482–505; sequence YNEGSEDDDAAESARFNEERHQRG. A compositionally biased stretch (basic and acidic residues) spans 496–505; sequence RFNEERHQRG. WD repeat units lie at residues 617–655, 659–698, and 725–755; these read PGVKQVTASGMGYGDNFITGSADSQCALFANAAGPEPTA, YHTSTIRNIDVHPCGGLVATCSDDGIVQISRIVDASLVKM, and DGSVGISRVTWHPRQPWLLCSGTDGVLRLFK.

It belongs to the WD repeat BOP1/ERB1 family. As to quaternary structure, interacts (via C-terminal WD repeats) with giardin subunit beta. Interacts (via C-terminal WD repeats) with EB1.

Its subcellular location is the nucleus. The protein resides in the nucleolus. The protein localises to the nucleus membrane. Functionally, required for maturation of ribosomal RNAs and formation of the large ribosomal subunit. This chain is Ribosome biogenesis protein BOP1, found in Giardia intestinalis (Giardia lamblia).